The following is a 451-amino-acid chain: Bacteriochlorophyllide d C-8(2)-methyltransferase (451 aa).

The region spanning 1–118 (MDDDSNQKPL…DDVANNRLKE (118 aa)) is the B12-binding domain. The Radical SAM core domain occupies 148–377 (VDGTKSIPIY…ALHLVIKSDR (230 aa)). The [4Fe-4S] cluster site is built by Cys-162, Cys-166, and Cys-169.

It belongs to the radical SAM superfamily. [4Fe-4S] cluster is required as a cofactor.

It is found in the cytoplasm. The catalysed reaction is 8,12-diethyl-3-vinylbacteriochlorophyllide d + S-adenosyl-L-methionine = 12-ethyl-8-propyl-3-vinylbacteriochlorophyllide d + S-adenosyl-L-homocysteine + H(+). It catalyses the reaction 12-ethyl-8-propyl-3-vinylbacteriochlorophyllide d + S-adenosyl-L-methionine = 12-ethyl-8-isobutyl-3-vinylbacteriochlorophyllide d + S-adenosyl-L-homocysteine + H(+). Its pathway is porphyrin-containing compound metabolism; bacteriochlorophyll biosynthesis (light-independent). In terms of biological role, involved in the biosynthesis of the major light-harvesting pigment bacteriochlorophyll c (BChlc), which confers a significant competitive advantage to green sulfur bacteria living at limiting red and near-infrared light intensities. BchQ is a methyltransferase that adds two consecutive methyl groups to the ethyl carbon at the C-8(2) position of 8,12-diethyl-3-vinylbacteriochlorophyllide d to yield 12-ethyl-8-isobutyl-3-vinylbacteriochlorophyllide d. In Chlorobaculum tepidum (strain ATCC 49652 / DSM 12025 / NBRC 103806 / TLS) (Chlorobium tepidum), this protein is Bacteriochlorophyllide d C-8(2)-methyltransferase.